Reading from the N-terminus, the 407-residue chain is MNGYISPLPDAAWNSRFPRSLVLLGSTGSIGTSALRVVERQPELFRITALAGARNVRLLARQAAAYRPPHLAVINGNAADELASLLPAGYRPRIHTGQEGYEFLAALPEADCVLSAQVGAAGLRATVAAARAGKTIALANKESLVLAGGLIRRLCHETGASVLPVDSEHNAIFQALQGHDAAQMRRIILTASGGPFRGRDRTFLQSVTREQALNHPNWSMGAKISIDSATLMNKGLEVIEACHLYNAPLEKVEVVVHPQSIIHSLVEYNDGSQIAHMGTPDMRIAIAYCLGWPRVMHTGVEPLDLLSVGSLTFESPDISLFPCLELARKAYAGGNGLPVVLNAANEVAVDLFLQGAIAFLDIPRLIEAAMQAHDAAPHQNMYDEVESILTLDKTTRRVTADLAGARG.

Residues Thr-27, Gly-28, Ser-29, Ile-30, Ala-53, Arg-54, Asn-55, and Asn-140 each contribute to the NADPH site. Lys-141 serves as a coordination point for 1-deoxy-D-xylulose 5-phosphate. Glu-142 provides a ligand contact to NADPH. Asp-166 contacts Mn(2+). 1-deoxy-D-xylulose 5-phosphate-binding residues include Ser-167, Glu-168, Ser-192, and His-215. Residue Glu-168 participates in Mn(2+) binding. Gly-221 is a binding site for NADPH. The 1-deoxy-D-xylulose 5-phosphate site is built by Ser-228, Asn-233, Lys-234, and Glu-237. Position 237 (Glu-237) interacts with Mn(2+).

Belongs to the DXR family. Mg(2+) is required as a cofactor. It depends on Mn(2+) as a cofactor.

The enzyme catalyses 2-C-methyl-D-erythritol 4-phosphate + NADP(+) = 1-deoxy-D-xylulose 5-phosphate + NADPH + H(+). It functions in the pathway isoprenoid biosynthesis; isopentenyl diphosphate biosynthesis via DXP pathway; isopentenyl diphosphate from 1-deoxy-D-xylulose 5-phosphate: step 1/6. Catalyzes the NADPH-dependent rearrangement and reduction of 1-deoxy-D-xylulose-5-phosphate (DXP) to 2-C-methyl-D-erythritol 4-phosphate (MEP). The protein is 1-deoxy-D-xylulose 5-phosphate reductoisomerase of Oleidesulfovibrio alaskensis (strain ATCC BAA-1058 / DSM 17464 / G20) (Desulfovibrio alaskensis).